The chain runs to 377 residues: Succinyl-diaminopimelate desuccinylase (377 aa).

Histidine 68 is a binding site for Zn(2+). Aspartate 70 is an active-site residue. Aspartate 101 is a binding site for Zn(2+). Glutamate 135 functions as the Proton acceptor in the catalytic mechanism. Residues glutamate 136, glutamate 164, and histidine 350 each coordinate Zn(2+).

This sequence belongs to the peptidase M20A family. DapE subfamily. As to quaternary structure, homodimer. Zn(2+) serves as cofactor. It depends on Co(2+) as a cofactor.

It catalyses the reaction N-succinyl-(2S,6S)-2,6-diaminopimelate + H2O = (2S,6S)-2,6-diaminopimelate + succinate. The protein operates within amino-acid biosynthesis; L-lysine biosynthesis via DAP pathway; LL-2,6-diaminopimelate from (S)-tetrahydrodipicolinate (succinylase route): step 3/3. Catalyzes the hydrolysis of N-succinyl-L,L-diaminopimelic acid (SDAP), forming succinate and LL-2,6-diaminopimelate (DAP), an intermediate involved in the bacterial biosynthesis of lysine and meso-diaminopimelic acid, an essential component of bacterial cell walls. The protein is Succinyl-diaminopimelate desuccinylase of Acinetobacter baumannii (strain AB0057).